The following is a 35-amino-acid chain: Conotoxin M11.2 (35 aa).

4 disulfide bridges follow: cysteine 2/cysteine 16, cysteine 9/cysteine 21, cysteine 15/cysteine 26, and cysteine 20/cysteine 33.

This sequence belongs to the conotoxin I1 superfamily. As to expression, expressed by the venom duct.

It localises to the secreted. The polypeptide is Conotoxin M11.2 (Conus magus (Magical cone)).